The chain runs to 261 residues: Short-chain dehydrogenase/reductase AFUA_1G00990 (261 aa).

Leu19, Asp67, Asn94, Tyr169, Lys173, and Thr213 together coordinate NADP(+). Tyr169 acts as the Proton donor in catalysis. Lys173 functions as the Lowers pKa of active site Tyr in the catalytic mechanism.

Belongs to the short-chain dehydrogenases/reductases (SDR) family.

Its function is as follows. Short-chain dehydrogenase/reductase; part of the gene cluster that mediates the biosynthesis of fumigermin that inhibits germination of spores of the inducing S.rapamycinicus, and thus helps the fungus to defend resources in the shared habitat against a bacterial competitor. The partially reducing polyketide synthase fngA alone is sufficient for the production of fumigermin. FgnA catalyzes the condensation of 3 malonyl-CoA units to an acetyl-CoA starter, and 3 methylations to yield fumigermin. It is remarkable that the five cluster genes including fgnA are conserved in distantly related fungi, supporting the assumption of a fumigermin cluster; it is thus possible that originally all five genes were functional, but that the genes encoding tailoring enzymes became inactive from mutations, similar to the case of the fgnA gene in strains A1163 and Af293. This chain is Short-chain dehydrogenase/reductase AFUA_1G00990, found in Aspergillus fumigatus (strain ATCC MYA-4609 / CBS 101355 / FGSC A1100 / Af293) (Neosartorya fumigata).